We begin with the raw amino-acid sequence, 179 residues long: Cytochrome b6-f complex iron-sulfur subunit (179 aa).

A helical transmembrane segment spans residues 21 to 43 (LLTFGSATGVALGMLYPVVRYFI). Residues 61 to 162 (GNDISVSDFL…AAVSDDKITF (102 aa)) enclose the Rieske domain. [2Fe-2S] cluster contacts are provided by Cys-108, His-110, Cys-126, and His-129. A disulfide bridge connects residues Cys-113 and Cys-128.

This sequence belongs to the Rieske iron-sulfur protein family. As to quaternary structure, the 4 large subunits of the cytochrome b6-f complex are cytochrome b6, subunit IV (17 kDa polypeptide, PetD), cytochrome f and the Rieske protein, while the 4 small subunits are PetG, PetL, PetM and PetN. The complex functions as a dimer. [2Fe-2S] cluster is required as a cofactor.

The protein resides in the cellular thylakoid membrane. The catalysed reaction is 2 oxidized [plastocyanin] + a plastoquinol + 2 H(+)(in) = 2 reduced [plastocyanin] + a plastoquinone + 4 H(+)(out). In terms of biological role, component of the cytochrome b6-f complex, which mediates electron transfer between photosystem II (PSII) and photosystem I (PSI), cyclic electron flow around PSI, and state transitions. This chain is Cytochrome b6-f complex iron-sulfur subunit, found in Cyanothece sp. (strain PCC 7425 / ATCC 29141).